The primary structure comprises 625 residues: MDQKAIVLDNSKSGSKQTKSSGKMQTQTDTNAEVLNTDNSIKKETGSDSEDLFNKFSNKKTNRKIPNIAEELAKNRNYVKGASPSPIIISGSSSTSPSGPSSSSTNPMGIPTNRFNKNTVELYQHSPSPVMTTNKTDTEEKRQNNRNMDNKNTPERGSSSFAAKQLKISSLLTISSNEDSKTLHINDTNGNKNSNAASNNIPSAYAELHTEGNSIESLIKPPSSPRNKSLTPKVILPTQNMDGTIAKDPHLGDNTPGILIAKTSSPVNLDVESTAQSLGKFNKSTNSLKAALTKAPAEKVSLKRSISSVTNSDSNISSSKKPTSEKAKKSSSASAILPKPTTTKTSKKAASNSSDSTRKKNASNKTTSAIKKESNAGSKLNTVKKENSSLSSIKATEKEKDKGGNSTEAKNSTSNVRKEPTAKSPKRLVAAPTVSPPKILQTAETKAKEPSILIDVPLYQADTNDYLDENGQVIFNLSTLIKEKYHPKSKELAQLKDSKRNLLMQLSDHSNGSLEKEKDEEGDVIELDDDEDMEEDEGEIDTETNTVTTTISPKKKSHPMKGKNLIGKYDVEDPFIDDSELLWEEQRAATKDGFFVYFGPLIEKGHYASLERANGTMKRGGVKNK.

Disordered stretches follow at residues 1–164 (MDQK…FAAK) and 295–437 (APAE…VSPP). Low complexity predominate over residues 11–28 (SKSGSKQTKSSGKMQTQT). Over residues 29–39 (DTNAEVLNTDN) the composition is skewed to polar residues. Serine 47 and serine 49 each carry phosphoserine. Low complexity predominate over residues 83 to 105 (SPSPIIISGSSSTSPSGPSSSST). The span at 113 to 135 (NRFNKNTVELYQHSPSPVMTTNK) shows a compositional bias: polar residues. Basic and acidic residues predominate over residues 136–154 (TDTEEKRQNNRNMDNKNTP). Residues 155-164 (ERGSSSFAAK) are compositionally biased toward polar residues. Low complexity-rich tracts occupy residues 305–321 (SISS…SSKK) and 330–355 (SSSA…NSSD). 2 stretches are compositionally biased toward polar residues: residues 363–381 (SNKT…SKLN) and 404–415 (GNSTEAKNSTSN). Position 435 is a phosphoserine (serine 435).

The protein belongs to the HPC2 family. Component of the HIR complex, composed of HIR1, HIR2, HIR3 and HPC2. This complex may consist of one copy of HIR1 and HIR3 and two copies of HIR2 and HPC2. The HIR complex interacts with ASF1. Interacts with RTT106.

Its subcellular location is the nucleus. It localises to the chromosome. Component of the HIR complex, which functions as a histone chaperone that cooperates with ASF1 to promote replication-independent chromatin assembly. The HIR complex is also required for the periodic repression of three of the four histone gene loci during cell cycle as well as for autogenous regulation of the HTA1-HTB1 locus by H2A and H2B. DNA-binding by the HIR complex may repress transcription by inhibiting nucleosome remodeling by the SWI/SNF complex. The HIR complex may also be required for transcriptional silencing of centromeric, telomeric and mating-type loci in the absence of CAF-1. The chain is Histone promoter control protein 2 (HPC2) from Saccharomyces cerevisiae (strain ATCC 204508 / S288c) (Baker's yeast).